A 195-amino-acid chain; its full sequence is GTP-dependent dephospho-CoA kinase (195 aa).

GTP-binding residues include Asp-49, Val-50, Asp-68, Glu-127, and Asp-150.

This sequence belongs to the GTP-dependent DPCK family.

The catalysed reaction is 3'-dephospho-CoA + GTP = GDP + CoA + H(+). It functions in the pathway cofactor biosynthesis; coenzyme A biosynthesis. Functionally, catalyzes the GTP-dependent phosphorylation of the 3'-hydroxyl group of dephosphocoenzyme A to form coenzyme A (CoA). This is GTP-dependent dephospho-CoA kinase from Methanosarcina barkeri (strain Fusaro / DSM 804).